We begin with the raw amino-acid sequence, 157 residues long: SsrA-binding protein (157 aa).

This sequence belongs to the SmpB family.

It localises to the cytoplasm. Its function is as follows. Required for rescue of stalled ribosomes mediated by trans-translation. Binds to transfer-messenger RNA (tmRNA), required for stable association of tmRNA with ribosomes. tmRNA and SmpB together mimic tRNA shape, replacing the anticodon stem-loop with SmpB. tmRNA is encoded by the ssrA gene; the 2 termini fold to resemble tRNA(Ala) and it encodes a 'tag peptide', a short internal open reading frame. During trans-translation Ala-aminoacylated tmRNA acts like a tRNA, entering the A-site of stalled ribosomes, displacing the stalled mRNA. The ribosome then switches to translate the ORF on the tmRNA; the nascent peptide is terminated with the 'tag peptide' encoded by the tmRNA and targeted for degradation. The ribosome is freed to recommence translation, which seems to be the essential function of trans-translation. The protein is SsrA-binding protein of Levilactobacillus brevis (strain ATCC 367 / BCRC 12310 / CIP 105137 / JCM 1170 / LMG 11437 / NCIMB 947 / NCTC 947) (Lactobacillus brevis).